A 132-amino-acid polypeptide reads, in one-letter code: D-beta-hydroxybutyrate dehydrogenase, mitochondrial (132 aa).

NAD(+) is bound at residue 3–27; that stretch reads LVTGCDSGFGFSLAKHLHSKGFLVF. The residue at position 17 (K17) is an N6-acetyllysine. S59 is a binding site for substrate. The active-site Proton acceptor is Y66. K70 bears the N6-acetyllysine mark. S77 is a glycosylation site (O-linked (GlcNAc) serine). Position 104 is a phosphoserine (S104).

It belongs to the short-chain dehydrogenases/reductases (SDR) family. In terms of assembly, homotetramer.

It localises to the mitochondrion inner membrane. The protein localises to the mitochondrion matrix. The catalysed reaction is (R)-3-hydroxybutanoate + NAD(+) = acetoacetate + NADH + H(+). Requires phosphatidylcholine as an allosteric activator for enzymatic activity. In Mesocricetus auratus (Golden hamster), this protein is D-beta-hydroxybutyrate dehydrogenase, mitochondrial.